The following is a 392-amino-acid chain: S-adenosylmethionine synthase (392 aa).

His20 contributes to the ATP binding site. Asp22 serves as a coordination point for Mg(2+). Glu48 is a K(+) binding site. L-methionine is bound by residues Glu61 and Gln106. Residues 106 to 116 are flexible loop; sequence QSRDIINAIEK. ATP is bound by residues 171–173, Asp248, 254–255, Ala271, and Lys275; these read DSK and RK. Asp248 is a binding site for L-methionine. Lys279 serves as a coordination point for L-methionine.

Belongs to the AdoMet synthase family. In terms of assembly, homotetramer; dimer of dimers. It depends on Mg(2+) as a cofactor. Requires K(+) as cofactor.

It localises to the cytoplasm. The catalysed reaction is L-methionine + ATP + H2O = S-adenosyl-L-methionine + phosphate + diphosphate. It functions in the pathway amino-acid biosynthesis; S-adenosyl-L-methionine biosynthesis; S-adenosyl-L-methionine from L-methionine: step 1/1. Its function is as follows. Catalyzes the formation of S-adenosylmethionine (AdoMet) from methionine and ATP. The overall synthetic reaction is composed of two sequential steps, AdoMet formation and the subsequent tripolyphosphate hydrolysis which occurs prior to release of AdoMet from the enzyme. The polypeptide is S-adenosylmethionine synthase (Borreliella afzelii (strain PKo) (Borrelia afzelii)).